The sequence spans 332 residues: uncharacterized protein (332 aa).

The N-terminal stretch at 1-26 (MSSLGKLLKLTLLGILLSFSCKFVFG) is a signal peptide.

It is found in the endoplasmic reticulum. This is an uncharacterized protein from Schizosaccharomyces pombe (strain 972 / ATCC 24843) (Fission yeast).